The sequence spans 168 residues: Putative apoptosis regulator A9 (168 aa).

Residues Ser143–Phe162 form a helical membrane-spanning segment.

The protein localises to the host membrane. In terms of biological role, suppresses apoptosis in host cell and thus facilitates production of progeny virions. This chain is Putative apoptosis regulator A9 (A9), found in Alcelaphine herpesvirus 1 (strain C500) (AlHV-1).